We begin with the raw amino-acid sequence, 658 residues long: L-type lectin-domain containing receptor kinase V.4 (658 aa).

The signal sequence occupies residues 1–25; sequence MSRTIGSRVIFLILALFCCTENSRG. Residues 26–248 are legume-lectin like; sequence KLVMQGSAGF…RAMHYMLSWF (223 aa). Topologically, residues 26–280 are extracellular; it reads KLVMQGSAGF…EKSLVYRIVL (255 aa). N-linked (GlcNAc...) asparagine glycans are attached at residues Asn66 and Asn196. The helical transmembrane segment at 281–301 threads the bilayer; the sequence is VTSLALVLFVALVASALSIFF. The Cytoplasmic segment spans residues 302–658; sequence YRRHKKVKEV…LTEPFTSRGR (357 aa). Residues 334–592 enclose the Protein kinase domain; sequence KGFKQLLGKG…LGVLCSHQAV (259 aa). ATP is bound by residues 340–348 and Lys363; that span reads LGKGGFGQV. Asp460 (proton acceptor) is an active-site residue.

It in the C-terminal section; belongs to the protein kinase superfamily. Ser/Thr protein kinase family. This sequence in the N-terminal section; belongs to the leguminous lectin family.

The protein localises to the cell membrane. It carries out the reaction L-seryl-[protein] + ATP = O-phospho-L-seryl-[protein] + ADP + H(+). The enzyme catalyses L-threonyl-[protein] + ATP = O-phospho-L-threonyl-[protein] + ADP + H(+). In terms of biological role, involved in resistance response to the pathogenic oomycetes Phytophthora infestans and Phytophthora capsici and to the pathogenic bacteria Pseudomonas syringae. In Arabidopsis thaliana (Mouse-ear cress), this protein is L-type lectin-domain containing receptor kinase V.4.